Reading from the N-terminus, the 100-residue chain is Small ribosomal subunit protein uS14c (100 aa).

The protein belongs to the universal ribosomal protein uS14 family. In terms of assembly, part of the 30S ribosomal subunit.

The protein resides in the plastid. Its subcellular location is the chloroplast. Functionally, binds 16S rRNA, required for the assembly of 30S particles. This chain is Small ribosomal subunit protein uS14c, found in Nephroselmis olivacea (Green alga).